Consider the following 1259-residue polypeptide: Lysine-specific demethylase 2B (1259 aa).

One can recognise a JmjC domain in the interval 147 to 315 (FSHTKLERVV…MQLRVFEIED (169 aa)). Threonine 208 serves as a coordination point for substrate. Fe cation contacts are provided by histidine 211 and aspartate 213. Lysine 228 is a binding site for substrate. Histidine 283 contacts Fe cation. Over residues 388–402 (EEKGNLVEKPSKQSG) the composition is skewed to basic and acidic residues. Disordered regions lie at residues 388–463 (EEKG…ATDM) and 536–562 (KPSK…SANR). The span at 403 to 413 (DESSTTNSTHS) shows a compositional bias: polar residues. The segment covering 414–423 (NGKDAAEKKQ) has biased composition (basic and acidic residues). Residues 426-437 (TLMQQLKRTLSN) show a composition bias toward polar residues. Residues 536 to 548 (KPSKNRAVGRPKG) are compositionally biased toward basic residues. The CXXC-type zinc-finger motif lies at 567–613 (ARRRRTRCRKCEACLRTECGECHFCKDMKKFGGPGRMKQSCIMRQCI). 16 residues coordinate Zn(2+): cysteine 574, cysteine 577, cysteine 580, cysteine 585, cysteine 588, cysteine 591, cysteine 607, cysteine 612, cysteine 623, cysteine 626, cysteine 649, cysteine 652, histidine 657, cysteine 660, cysteine 680, and cysteine 683. The PHD-type zinc-finger motif lies at 620–686 (TAVCLVCGEA…CWECPKCNHA (67 aa)). Composition is skewed to basic and acidic residues over residues 729 to 763 (KKKV…EDGH) and 771 to 790 (EKPP…EEKL). The segment at 729–958 (KKKVEREETP…PPPSLSPPKC (230 aa)) is disordered. The segment covering 835–848 (SRSSSPTAGPSTEG) has biased composition (polar residues). Over residues 854 to 863 (KKKIRRKRRV) the composition is skewed to basic residues. The span at 864-877 (SNKELSKELSKELN) shows a compositional bias: basic and acidic residues. Residues 864–891 (SNKELSKELSKELNQEIQKTESSLASEN) adopt a coiled-coil conformation. The segment covering 878–889 (QEIQKTESSLAS) has biased composition (polar residues). Over residues 890–908 (ENHHPIKSEPESDNEESKK) the composition is skewed to basic and acidic residues. An F-box domain is found at 985–1030 (AHVMQREVWMAIFSYLSHRDLCICMRICRTWNRWCCDKRLWTQIDL). LRR repeat units follow at residues 1056–1081 (WTNI…NLSG), 1082–1105 (CSWI…NVQW), 1145–1170 (GLDI…DLSY), 1171–1200 (CNHV…NLSD), and 1201–1225 (CNNV…DLRF).

It belongs to the JHDM1 histone demethylase family. Requires Fe(2+) as cofactor.

The protein resides in the nucleus. The protein localises to the nucleolus. It localises to the chromosome. The catalysed reaction is N(6),N(6)-dimethyl-L-lysyl(36)-[histone H3] + 2 2-oxoglutarate + 2 O2 = L-lysyl(36)-[histone H3] + 2 formaldehyde + 2 succinate + 2 CO2. Its activity is regulated as follows. Histone demethylase activity is inhibited by fumarate. Histone demethylase that demethylates 'Lys-4' and 'Lys-36' of histone H3, thereby playing a central role in histone code. Preferentially demethylates trimethylated H3 'Lys-4' and dimethylated H3 'Lys-36' residue while it has weak or no activity for mono- and tri-methylated H3 'Lys-36'. Preferentially binds the transcribed region of ribosomal RNA and represses the transcription of ribosomal RNA genes which inhibits cell growth and proliferation. This is Lysine-specific demethylase 2B (kdm2b) from Xenopus laevis (African clawed frog).